Reading from the N-terminus, the 149-residue chain is Large ribosomal subunit protein uL16c (149 aa).

It belongs to the universal ribosomal protein uL16 family. As to quaternary structure, part of the 50S ribosomal subunit.

It is found in the plastid. It localises to the organellar chromatophore. In Paulinella chromatophora, this protein is Large ribosomal subunit protein uL16c (rpl16).